A 315-amino-acid polypeptide reads, in one-letter code: Microtubule-associated protein Jupiter (315 aa).

Residues 1-14 are compositionally biased toward polar residues; the sequence is MISNFDCTDNQASS. 2 disordered regions span residues 1–37 and 51–89; these read MISN…QTPR and EKDN…PGKN. Position 24 is a phosphoserine (Ser-24). Thr-35 bears the Phosphothreonine mark. The segment covering 62–76 has biased composition (basic and acidic residues); it reads APRRGQKTVDSHSRL. 2 positions are modified to phosphothreonine: Thr-81 and Thr-85. A phosphoserine mark is found at Ser-94, Ser-122, and Ser-133. Disordered regions lie at residues 116-166 and 272-315; these read YNGK…ADDA and EGNP…SGLW. The segment covering 120–133 has biased composition (low complexity); the sequence is SGSVSSASSSVSSS. Composition is skewed to polar residues over residues 134–148 and 285–296; these read TENL…SVFR and DFTQRQESSNGG.

It belongs to the MAP Jupiter family.

It is found in the nucleus. The protein resides in the cytoplasm. It localises to the cytoskeleton. The protein localises to the spindle. Binds to all microtubule populations. This Drosophila sechellia (Fruit fly) protein is Microtubule-associated protein Jupiter.